The sequence spans 144 residues: Putative protein PHLOEM PROTEIN 2-LIKE B4 (144 aa).

The polypeptide is Putative protein PHLOEM PROTEIN 2-LIKE B4 (PP2B4) (Arabidopsis thaliana (Mouse-ear cress)).